A 160-amino-acid chain; its full sequence is General odorant-binding protein 2 (160 aa).

Residues 1-19 (MGYKLLLMYIAIVIDSVIG) form the signal peptide. 3 disulfides stabilise this stretch: cysteine 38–cysteine 73, cysteine 69–cysteine 127, and cysteine 116–cysteine 136.

Belongs to the PBP/GOBP family. In terms of tissue distribution, antenna.

Its function is as follows. Present in the aqueous fluid surrounding olfactory sensory dendrites and are thought to aid in the capture and transport of hydrophobic odorants into and through this fluid. This Antheraea pernyi (Chinese oak silk moth) protein is General odorant-binding protein 2.